The sequence spans 1541 residues: WD repeat-containing protein 62 (1541 aa).

Residue Ala2 is modified to N-acetylalanine. Phosphoserine is present on Ser33. Phosphothreonine is present on Thr46. 12 WD repeats span residues 109–150, 153–194, 196–234, 291–330, 357–396, 402–450, 490–529, 532–574, 578–618, 626–665, 671–713, and 714–752; these read TARK…QVAE, GHKY…VVAS, KVSC…EAKV, INLK…YLAN, AVYP…KVGK, FHSS…DSHW, DMKA…ELVR, AHDA…SLEQ, DHSS…DGLH, AEKT…QKKC, GDEG…KMFG, and HSEI…TNCM. Phosphoserine is present on Ser501. 2 disordered regions span residues 762 to 820 and 911 to 1050; these read REQP…KESL and LSQS…LPQT. Positions 770–780 are enriched in basic and acidic residues; the sequence is KDGKWSRDPRQ. A compositionally biased stretch (polar residues) spans 781–795; sequence ETCTSMPSEISLSPG. Positions 797 to 809 are enriched in acidic residues; it reads QTEDELEEECEPE. A WD 13 repeat occupies 803-846; the sequence is EEECEPEELLKTPSKESLDSDPRCLLTNGKLPLWAKRLLGDDDV. Basic and acidic residues predominate over residues 810–820; sequence ELLKTPSKESL. Residues 937–948 are compositionally biased toward low complexity; sequence VSELLCSLESEV. Ser943 carries the phosphoserine modification. The segment covering 1008-1026 has biased composition (pro residues); sequence PPRPDPDPPFDVAVPPAPG. The residue at position 1050 (Thr1050) is a Phosphothreonine. 3 positions are modified to phosphoserine: Ser1095, Ser1125, and Ser1151. 2 disordered regions span residues 1133–1153 and 1185–1212; these read LAGS…TSPG and SSSS…QGVH. One copy of the WD 14 repeat lies at 1138-1180; it reads PRAEPLRAGTGYTSPGRTNVLSAGKAEEPLEAWSPLTSCLTGL. The segment covering 1193-1202 has biased composition (pro residues); sequence DKTPPTPTAL. Residues Ser1235, Ser1255, and Ser1256 each carry the phosphoserine modification. The interval 1273-1293 is disordered; sequence TVTPSSDSEGQEPALPSRGNH. A Phosphothreonine modification is found at Thr1275.

In terms of assembly, can form homodimers (via C-terminus). Interacts (via C-terminus) with MAPKBP1 (via C-terminus). Interacts with CDK5RAP2, CEP152, CEP63 and KIAA0753. CEP63, CDK5RAP2, CEP152, WDR62 are proposed to form a stepwise assembled complex at the centrosome forming a ring near parental centrioles.

It localises to the nucleus. It is found in the cytoplasm. Its subcellular location is the cytoskeleton. The protein localises to the spindle pole. The protein resides in the microtubule organizing center. It localises to the centrosome. It is found in the centriole. Its function is as follows. Required for cerebral cortical development. Plays a role in neuronal proliferation and migration. Plays a role in mother-centriole-dependent centriole duplication; the function seems also to involve CEP152, CDK5RAP2 and CEP63 through a stepwise assembled complex at the centrosome that recruits CDK2 required for centriole duplication. This chain is WD repeat-containing protein 62 (WDR62), found in Sus scrofa (Pig).